A 344-amino-acid chain; its full sequence is Holliday junction branch migration complex subunit RuvB (344 aa).

A large ATPase domain (RuvB-L) region spans residues 1 to 183 (MPDRELISGD…FGLVLRLDPY (183 aa)). ATP contacts are provided by residues leucine 22, arginine 23, glycine 64, lysine 67, threonine 68, threonine 69, 130–132 (EDF), arginine 173, tyrosine 183, and arginine 220. Threonine 68 is a binding site for Mg(2+). A small ATPAse domain (RuvB-S) region spans residues 184–254 (NTEELKAIVK…VAQTALNLLD (71 aa)). The interval 257–344 (RYGLDEIDQK…EGDHPSLFEA (88 aa)) is head domain (RuvB-H). Residues arginine 312 and arginine 317 each coordinate DNA.

It belongs to the RuvB family. As to quaternary structure, homohexamer. Forms an RuvA(8)-RuvB(12)-Holliday junction (HJ) complex. HJ DNA is sandwiched between 2 RuvA tetramers; dsDNA enters through RuvA and exits via RuvB. An RuvB hexamer assembles on each DNA strand where it exits the tetramer. Each RuvB hexamer is contacted by two RuvA subunits (via domain III) on 2 adjacent RuvB subunits; this complex drives branch migration. In the full resolvosome a probable DNA-RuvA(4)-RuvB(12)-RuvC(2) complex forms which resolves the HJ.

It localises to the cytoplasm. The catalysed reaction is ATP + H2O = ADP + phosphate + H(+). Functionally, the RuvA-RuvB-RuvC complex processes Holliday junction (HJ) DNA during genetic recombination and DNA repair, while the RuvA-RuvB complex plays an important role in the rescue of blocked DNA replication forks via replication fork reversal (RFR). RuvA specifically binds to HJ cruciform DNA, conferring on it an open structure. The RuvB hexamer acts as an ATP-dependent pump, pulling dsDNA into and through the RuvAB complex. RuvB forms 2 homohexamers on either side of HJ DNA bound by 1 or 2 RuvA tetramers; 4 subunits per hexamer contact DNA at a time. Coordinated motions by a converter formed by DNA-disengaged RuvB subunits stimulates ATP hydrolysis and nucleotide exchange. Immobilization of the converter enables RuvB to convert the ATP-contained energy into a lever motion, pulling 2 nucleotides of DNA out of the RuvA tetramer per ATP hydrolyzed, thus driving DNA branch migration. The RuvB motors rotate together with the DNA substrate, which together with the progressing nucleotide cycle form the mechanistic basis for DNA recombination by continuous HJ branch migration. Branch migration allows RuvC to scan DNA until it finds its consensus sequence, where it cleaves and resolves cruciform DNA. The protein is Holliday junction branch migration complex subunit RuvB of Solibacter usitatus (strain Ellin6076).